Reading from the N-terminus, the 254-residue chain is Geranylgeranylglyceryl phosphate synthase (254 aa).

The Mg(2+) site is built by aspartate 28 and serine 53. Sn-glycerol 1-phosphate is bound by residues 172–178 (YLEAGSG), 203–204 (GG), and 225–226 (GT).

This sequence belongs to the GGGP/HepGP synthase family. Group II subfamily. Mg(2+) serves as cofactor.

The protein localises to the cytoplasm. The enzyme catalyses sn-glycerol 1-phosphate + (2E,6E,10E)-geranylgeranyl diphosphate = sn-3-O-(geranylgeranyl)glycerol 1-phosphate + diphosphate. The protein operates within membrane lipid metabolism; glycerophospholipid metabolism. Its function is as follows. Prenyltransferase that catalyzes the transfer of the geranylgeranyl moiety of geranylgeranyl diphosphate (GGPP) to the C3 hydroxyl of sn-glycerol-1-phosphate (G1P). This reaction is the first ether-bond-formation step in the biosynthesis of archaeal membrane lipids. The polypeptide is Geranylgeranylglyceryl phosphate synthase (Methanococcus vannielii (strain ATCC 35089 / DSM 1224 / JCM 13029 / OCM 148 / SB)).